The following is a 591-amino-acid chain: Aspartate--tRNA ligase (591 aa).

Residue Glu-176 participates in L-aspartate binding. Residues 200–203 are aspartate; the sequence is QILK. An L-aspartate-binding site is contributed by Arg-222. Residues 222–224 and Gln-231 each bind ATP; that span reads RDE. His-450 serves as a coordination point for L-aspartate. Glu-484 contributes to the ATP binding site. An L-aspartate-binding site is contributed by Arg-491. 536–539 contributes to the ATP binding site; the sequence is GLDR.

This sequence belongs to the class-II aminoacyl-tRNA synthetase family. Type 1 subfamily. In terms of assembly, homodimer.

It localises to the cytoplasm. The enzyme catalyses tRNA(Asp) + L-aspartate + ATP = L-aspartyl-tRNA(Asp) + AMP + diphosphate. Its function is as follows. Catalyzes the attachment of L-aspartate to tRNA(Asp) in a two-step reaction: L-aspartate is first activated by ATP to form Asp-AMP and then transferred to the acceptor end of tRNA(Asp). This chain is Aspartate--tRNA ligase, found in Listeria monocytogenes serotype 4b (strain F2365).